A 168-amino-acid chain; its full sequence is Glycine-rich RNA-binding protein 2 (168 aa).

An RRM domain is found at Y8–S86. A disordered region spans residues G148–N168.

Its function is as follows. Possibly has a role in RNA transcription or processing during stress. The protein is Glycine-rich RNA-binding protein 2 (GRP2) of Sorghum bicolor (Sorghum).